Here is a 283-residue protein sequence, read N- to C-terminus: BTB/POZ domain-containing protein KCTD15 (283 aa).

Positions 1–33 (MPHRKERPSGSSLNAHGSSGTAEGGNMSRLSLT) are disordered. Residues 9–21 (SGSSLNAHGSSGT) show a composition bias toward polar residues. 3 positions are modified to phosphoserine: Ser31, Ser35, and Ser38. Positions 56-126 (APVHIDVGGH…LRTSKLLLPD (71 aa)) constitute a BTB domain.

Forms oligomers, predominantly homopentamers. Interacts with KCTD1, probably forming heteropentamers depending on its abundance in a cell-type dependent manner. Interacts with TFAP2A; this interaction inhibits TFAP2A transcriptional activation. In terms of tissue distribution, expressed in the cerebral cortex, cerebellum, and hypothalamus (at protein level). Expressed in the arcuate hypothalamic nucleus, the ventromedial hypothalamic nucleus and the accumbens nucleus of the ventral striatum.

It is found in the nucleus. Functionally, during embryonic development, interferes with neural crest formation. Inhibits AP2 transcriptional activity by interaction with its activation domain. The polypeptide is BTB/POZ domain-containing protein KCTD15 (Kctd15) (Mus musculus (Mouse)).